A 372-amino-acid polypeptide reads, in one-letter code: L-selectin (372 aa).

The signal sequence occupies residues 1-28; that stretch reads MVFPWRCQSAQRGSWSFLKLWIRTLLCC. The propeptide occupies 29 to 38; the sequence is DLLPHHGTHC. The Extracellular segment spans residues 39 to 332; that stretch reads WTYHYSERSM…FSKIKEGDYN (294 aa). The 101-residue stretch at 55-155 folds into the C-type lectin domain; it reads KFCKHNYTDL…ACHKRKAALC (101 aa). Cystine bridges form between Cys57/Cys155, Cys128/Cys147, Cys128/Cys160, Cys160/Cys171, Cys165/Cys180, Cys182/Cys191, Cys197/Cys241, Cys227/Cys254, Cys259/Cys303, and Cys289/Cys316. N-linked (GlcNAc...) asparagine glycans are attached at residues Asn60 and Asn104. Ca(2+) is bound by residues Glu118, Asn120, Glu126, Asn143, and Asp144. Positions 156 to 192 constitute an EGF-like domain; the sequence is YTASCQPESCNRHGECVETINNNTCICDPGYYGPQCQ. Asn177 is a glycosylation site (N-linked (GlcNAc...) asparagine). Sushi domains are found at residues 195 to 256 and 257 to 318; these read IQCE…ICQV and IQCM…ICQK. Asn226, Asn246, and Asn278 each carry an N-linked (GlcNAc...) asparagine glycan. The helical transmembrane segment at 333 to 355 threads the bilayer; it reads PLFIPVAVMVTAFSGLAFIIWLA. Residues 356 to 372 are Cytoplasmic-facing; it reads RRLKKGKKSQERMDDPY.

It belongs to the selectin/LECAM family. Interaction with SELPLG/PSGL1 and PODXL2 is required for promoting recruitment and rolling of leukocytes. This interaction is dependent on the sialyl Lewis X glycan modification of SELPLG and PODXL2, and tyrosine sulfation modifications of SELPLG. Sulfation on 'Tyr-51' of SELPLG is important for L-selectin binding. Post-translationally, N-glycosylated. As to expression, expressed in peripheral blood mononuclear cells (PBMC), spleen and thymus.

It localises to the cell membrane. Calcium-dependent lectin that mediates cell adhesion by binding to glycoproteins on neighboring cells. Mediates the adherence of lymphocytes to endothelial cells of high endothelial venules in peripheral lymph nodes. Promotes initial tethering and rolling of leukocytes in endothelia. This Rattus norvegicus (Rat) protein is L-selectin (Sell).